The primary structure comprises 87 residues: Acyl carrier protein 3 (87 aa).

A Carrier domain is found at Met-1–Leu-79. Ser-39 carries the post-translational modification O-(pantetheine 4'-phosphoryl)serine.

It belongs to the acyl carrier protein (ACP) family. 4'-phosphopantetheine is transferred from CoA to a specific serine of apo-ACP by AcpS. This modification is essential for activity because fatty acids are bound in thioester linkage to the sulfhydryl of the prosthetic group.

The protein resides in the cytoplasm. It functions in the pathway lipid metabolism; fatty acid biosynthesis. Its function is as follows. Carrier of the growing fatty acid chain in fatty acid biosynthesis. The sequence is that of Acyl carrier protein 3 from Ralstonia nicotianae (strain ATCC BAA-1114 / GMI1000) (Ralstonia solanacearum).